We begin with the raw amino-acid sequence, 161 residues long: Large-conductance mechanosensitive channel (161 aa).

Helical transmembrane passes span 14-34 and 85-105; these read VVDM…VNTL and GLFL…FILV.

The protein belongs to the MscL family. In terms of assembly, homopentamer.

Its subcellular location is the cell inner membrane. In terms of biological role, channel that opens in response to stretch forces in the membrane lipid bilayer. May participate in the regulation of osmotic pressure changes within the cell. This chain is Large-conductance mechanosensitive channel, found in Chlorobium luteolum (strain DSM 273 / BCRC 81028 / 2530) (Pelodictyon luteolum).